A 283-amino-acid chain; its full sequence is Zip homologous protein 4 (283 aa).

The RING-type zinc-finger motif lies at 6-50; that stretch reads CFRCYKFPSKQIEFYLTNCMHMFCIECERLCHPPEEEPLKCIQCS. Disordered stretches follow at residues 149 to 175 and 201 to 283; these read KKQL…SSRS and TKAQ…RNSQ. Polar residues predominate over residues 163-175; it reads PRSNSLKVASSRS. The segment covering 202 to 216 has biased composition (low complexity); the sequence is KAQAKAEAEAEAPAK. The segment covering 220-235 has biased composition (polar residues); it reads SKAQTTKCTSNYQSHP. The segment covering 267–283 has biased composition (basic and acidic residues); the sequence is KKHEAQREKHKEHRNSQ.

Interacts with zhp-3; the interaction is required for their localization along paired chromosomes and stability, and for the formation of chiasma during meiotic recombination. As to expression, expressed in the germline.

It is found in the chromosome. Its function is as follows. Recruited co-dependently with zhp-3 to the synaptonemal complex between homologous chromosome pairs to regulate the formation and number of crossover events between homologs during meiotic recombination. In the early stages of pachytene, in complex with zhp-4, recruited by the zhp-1-zhp-2 heterodimer to designated crossover sites along the recombination intermediate to stabilize other pro-crossover factors such as rmh-1, msh-5 and cosa-1. This in turn facilitates crossover and promotes the formation of chiasma in each meiotic nucleus at the late pachytene stage of meiosis. Negatively regulates double strand break formation to promote formation of the crossover intermediate. The polypeptide is Zip homologous protein 4 (Caenorhabditis elegans).